The chain runs to 260 residues: Coiled-coil domain-containing protein 172 (260 aa).

A coiled-coil region spans residues 13-194 (SEHQAEESRR…FEDKKHEAIC (182 aa)).

It belongs to the CCDC172 family. In terms of assembly, may interact with TEKT2.

The protein resides in the cytoplasm. It is found in the cell projection. The protein localises to the cilium. This chain is Coiled-coil domain-containing protein 172 (CCDC172), found in Bos taurus (Bovine).